We begin with the raw amino-acid sequence, 1818 residues long: Cytadherence high molecular weight protein 2 (1818 aa).

Coiled-coil stretches lie at residues 31 to 880 (LESA…KQRE), 919 to 1607 (ELKI…DNKH), 1644 to 1755 (HLFE…QAVQ), and 1786 to 1817 (LATQQSISKQQQIAQLNAEINSIKKLIAQKAA).

In terms of processing, phosphorylated mainly on serine residues.

Its function is as follows. Component of the cytoskeleton-like structure which stabilizes the shape of the wall-less Mycoplasma. This cytoskeleton-like network of accessory proteins containing HMW proteins 1 to 5 allows the proper anchoring of cytadhesin proteins in the mycoplasmal membrane at the attachment organelle. This Mycoplasma pneumoniae (strain ATCC 29342 / M129 / Subtype 1) (Mycoplasmoides pneumoniae) protein is Cytadherence high molecular weight protein 2 (hmw2).